The chain runs to 128 residues: Lymphocyte antigen 6D (128 aa).

The first 20 residues, 1–20 (MKTVLLFLVALAAAAGPAQA), serve as a signal peptide directing secretion. The UPAR/Ly6 domain occupies 21-108 (LRCHVCTSSS…WQSAAPARTS (88 aa)). 5 cysteine pairs are disulfide-bonded: C23/C45, C26/C32, C38/C63, C67/C86, and C87/C92. S98 carries the GPI-anchor amidated serine lipid modification. Positions 99–128 (WQSAAPARTSAHLGLALACGLLALLWAPGL) are cleaved as a propeptide — removed in mature form.

The protein localises to the cell membrane. May act as a specification marker at earliest stage specification of lymphocytes between B- and T-cell development. Marks the earliest stage of B-cell specification. The polypeptide is Lymphocyte antigen 6D (LY6D) (Bos taurus (Bovine)).